A 415-amino-acid chain; its full sequence is MLHRPRITPAVANARRAMLNTLPADLHNQLVLIALSGGRDSLAAMVIASWVIPRLNGRVGAVVVDHGLQENSARIADEVRIRAEQFALNPILIKRVSPSRVSAGPEASARIARYAAFYDALEETKAYAIILAHTLDDQAETVLLGLMRGSGPSSLRGMKAVSYTPEDCRYMNNKACNSVTAVYAHNTQRCSCDSTQRCSCDSRPYPPPPEPRNENRSYFPHPSCKCVEGSATRFTNADIDSRFGVFIRPFLDITRHETGKICEFYGLDYWNDPHNEDVRFSRVRIRHNVMPVLENEIGPGVKYALSRTAKLAQLDTEYLDHLSNELLDEIASKESDWSIRLPINTLQKTPVPIRLRVIRLAALQYFTVSLSFKHTRQIERLLCSSCDIKHVNLPRLITAQRVGNYIYMHTLRGKL.

36–41 (SGGRDS) contacts ATP.

Belongs to the tRNA(Ile)-lysidine synthase family.

Its subcellular location is the cytoplasm. The catalysed reaction is cytidine(34) in tRNA(Ile2) + L-lysine + ATP = lysidine(34) in tRNA(Ile2) + AMP + diphosphate + H(+). Its function is as follows. Ligates lysine onto the cytidine present at position 34 of the AUA codon-specific tRNA(Ile) that contains the anticodon CAU, in an ATP-dependent manner. Cytidine is converted to lysidine, thus changing the amino acid specificity of the tRNA from methionine to isoleucine. In Tropheryma whipplei (strain Twist) (Whipple's bacillus), this protein is tRNA(Ile)-lysidine synthase.